The primary structure comprises 198 residues: FMN-dependent NADH:quinone oxidoreductase (198 aa).

96-99 (MYNF) serves as a coordination point for FMN.

It belongs to the azoreductase type 1 family. In terms of assembly, homodimer. Requires FMN as cofactor.

The catalysed reaction is 2 a quinone + NADH + H(+) = 2 a 1,4-benzosemiquinone + NAD(+). It catalyses the reaction N,N-dimethyl-1,4-phenylenediamine + anthranilate + 2 NAD(+) = 2-(4-dimethylaminophenyl)diazenylbenzoate + 2 NADH + 2 H(+). Quinone reductase that provides resistance to thiol-specific stress caused by electrophilic quinones. Functionally, also exhibits azoreductase activity. Catalyzes the reductive cleavage of the azo bond in aromatic azo compounds to the corresponding amines. The polypeptide is FMN-dependent NADH:quinone oxidoreductase (Burkholderia thailandensis (strain ATCC 700388 / DSM 13276 / CCUG 48851 / CIP 106301 / E264)).